The sequence spans 168 residues: Large ribosomal subunit protein uL16 (168 aa).

This sequence belongs to the universal ribosomal protein uL16 family.

This Thermofilum pendens (strain DSM 2475 / Hrk 5) protein is Large ribosomal subunit protein uL16.